A 429-amino-acid chain; its full sequence is MAKGIRSIRGFSDILPEQTPLWQFVESNIQATLEAYGYREIRLPIVEKTELFSRSIGEVTDIVEKEMYTFEDRNGDSLTLRPEGTAGCVRCGIQNGLFHGGQPRVWYAGPMFRHERPQKGRYRQFHQIGAEVYGESGPGVDAEMILMTARLLRCLGLEDVRLELNTLGTGEARAAHRAALVEYLQAHEDRLDDDARRRLHSNPLRILDTKNPDMQALVEQAPRLMDYLDEDSRSHFQAVCRVLDQAGVAYRVNPRLVRGLDYYSRTVFEWITDRLGAQGTVLAGGRYDTLVEQIGGKPTPAIGFALGLERLVSLLEESGISGPQSGPHAFVVSADSLRALPLVEGLRDRLPGLRLQMQTEGGSFRSQFKRADRSGAALALVLGEEELAEGRFGVKDLRGDAEQQRLDPEALSDYLARRWPELAATEVTD.

The protein belongs to the class-II aminoacyl-tRNA synthetase family. Homodimer.

It localises to the cytoplasm. The catalysed reaction is tRNA(His) + L-histidine + ATP = L-histidyl-tRNA(His) + AMP + diphosphate + H(+). In Alkalilimnicola ehrlichii (strain ATCC BAA-1101 / DSM 17681 / MLHE-1), this protein is Histidine--tRNA ligase.